Consider the following 249-residue polypeptide: 2,5-diamino-6-ribosylamino-4(3H)-pyrimidinone 5'-phosphate reductase (249 aa).

NADP(+) contacts are provided by residues T79, D83, M164, and 187–191; that span reads GGIVI.

Belongs to the HTP reductase family. Homodimer.

The catalysed reaction is 2,5-diamino-6-(1-D-ribitylamino)pyrimidin-4(3H)-one 5'-phosphate + NADP(+) = 2,5-diamino-6-(1-D-ribosylamino)pyrimidin-4(3H)-one 5'-phosphate + NADPH + H(+). The enzyme catalyses 2,5-diamino-6-(1-D-ribitylamino)pyrimidin-4(3H)-one 5'-phosphate + NAD(+) = 2,5-diamino-6-(1-D-ribosylamino)pyrimidin-4(3H)-one 5'-phosphate + NADH + H(+). It participates in cofactor biosynthesis; riboflavin biosynthesis. Functionally, catalyzes an early step in riboflavin biosynthesis, the NADPH-dependent reduction of the ribose side chain of 2,5-diamino-6-ribosylamino-4(3H)-pyrimidinone 5'-phosphate, yielding 2,5-diamino-6-ribitylamino-4(3H)-pyrimidinone 5'-phosphate. The protein is 2,5-diamino-6-ribosylamino-4(3H)-pyrimidinone 5'-phosphate reductase (RIB7) of Kluyveromyces marxianus (Yeast).